The chain runs to 563 residues: Inorganic phosphate transporter PT2 (563 aa).

2 disordered regions span residues 1 to 51 (MAPR…SGEE) and 67 to 96 (DGGA…PAYS). Residues 1 to 127 (MAPRYHSAAE…NGEKQSLLVP (127 aa)) are Extracellular-facing. A helical membrane pass occupies residues 128–148 (CLAVFSSNYNFTVTSIALFLM). Over 149–168 (NQDPLYKDASDTVVGSSTVK) the chain is Cytoplasmic. Residues 169-189 (MLSYAGAIVGMCTMGYLGDLI) form a helical membrane-spanning segment. The Extracellular portion of the chain corresponds to 190–192 (GRR). A helical transmembrane segment spans residues 193 to 213 (LAMILTLALVFIGALLSSICA). The Cytoplasmic segment spans residues 214–217 (WGDG). A helical membrane pass occupies residues 218 to 238 (VTVLVIMGVCRFVLGVGSGGV). Residues 239-263 (YPLSAVSAAEGAGSEKSNDRSMRVS) are Extracellular-facing. Residues 264-284 (WAYSMNVPGIMFPYIVALVLW) form a helical membrane-spanning segment. Over 285–291 (CTTHNVD) the chain is Cytoplasmic. Residues 292-312 (VCFRILLGFGALPALLIWLPA) form a helical membrane-spanning segment. The Extracellular segment spans residues 313–342 (WRMKEDRAYVAKDFAKHLAGVFVSRSYWRQ). A helical transmembrane segment spans residues 343 to 363 (LLGTGVCWLLYDVTAYGILLV). The Cytoplasmic portion of the chain corresponds to 364–380 (QPEITQSIWGNSSSVTD). The chain crosses the membrane as a helical span at residues 381–401 (VIWQNIILNGMGIPGCFMGIL). Residues 402–412 (VLKQMGVKWLQ) are Extracellular-facing. The helical transmembrane segment at 413–433 (FWGFVGLAVSAFLMAATVEIL) threads the bilayer. The Cytoplasmic segment spans residues 434–440 (QGKAWAQ). A helical membrane pass occupies residues 441-461 (LVLLCIVNFFINWGASITTFI). Over 462–477 (LPSLVFPPEVRSTYSG) the chain is Extracellular. A helical membrane pass occupies residues 478–498 (ISAALGKIGAVGGIYTMKAIL). Residues 499-504 (STGGLT) lie on the Cytoplasmic side of the membrane. The helical transmembrane segment at 505-525 (PMMICAGVPSLAAAILTWFYV) threads the bilayer. The Extracellular segment spans residues 526 to 563 (DPVPNTLRSSFLQCFGSLAGSCPFIDCRKFRRGSRAFE).

This sequence belongs to the major facilitator superfamily. Phosphate:H(+) symporter (TC 2.A.1.9) family.

The protein resides in the cell membrane. It catalyses the reaction phosphate(in) = phosphate(out). Inorganic phosphate transporter. Activity is likely sodium-independent. Exhibits higher activity under acidic pH, implying that either the monovalent form of phosphate is the preferred substrate or the transport activity is H(+)-dependent. The sequence is that of Inorganic phosphate transporter PT2 from Toxoplasma gondii (strain ATCC 50861 / VEG).